Here is a 298-residue protein sequence, read N- to C-terminus: Flavin-dependent thymidylate synthase (298 aa).

A ThyX domain is found at Gly-41–Tyr-251. Residues Thr-87, Arg-110–Arg-112, and Glu-118 contribute to the FAD site. Residues Gln-107–Arg-110, Glu-118–Arg-122, and Arg-190 each bind dUMP. Residues Arg-110–Ser-120 carry the ThyX motif motif. FAD contacts are provided by residues Asp-206–His-208 and His-212. Arg-217 is a dUMP binding site. The active-site Involved in ionization of N3 of dUMP, leading to its activation is the Arg-217.

This sequence belongs to the thymidylate synthase ThyX family. Homotetramer. FAD serves as cofactor.

It carries out the reaction dUMP + (6R)-5,10-methylene-5,6,7,8-tetrahydrofolate + NADPH + H(+) = dTMP + (6S)-5,6,7,8-tetrahydrofolate + NADP(+). It functions in the pathway pyrimidine metabolism; dTTP biosynthesis. Catalyzes the reductive methylation of 2'-deoxyuridine-5'-monophosphate (dUMP) to 2'-deoxythymidine-5'-monophosphate (dTMP) while utilizing 5,10-methylenetetrahydrofolate (mTHF) as the methyl donor, and NADPH and FADH(2) as the reductant. The protein is Flavin-dependent thymidylate synthase of Ehrlichia ruminantium (strain Welgevonden).